The chain runs to 422 residues: UDP-N-acetylglucosamine 1-carboxyvinyltransferase (422 aa).

22–23 provides a ligand contact to phosphoenolpyruvate; that stretch reads KN. UDP-N-acetyl-alpha-D-glucosamine is bound at residue R93. C117 acts as the Proton donor in catalysis. C117 is modified (2-(S-cysteinyl)pyruvic acid O-phosphothioketal). UDP-N-acetyl-alpha-D-glucosamine contacts are provided by residues 122 to 126, D308, and L330; that span reads RPVDL.

It belongs to the EPSP synthase family. MurA subfamily.

The protein resides in the cytoplasm. The enzyme catalyses phosphoenolpyruvate + UDP-N-acetyl-alpha-D-glucosamine = UDP-N-acetyl-3-O-(1-carboxyvinyl)-alpha-D-glucosamine + phosphate. It participates in cell wall biogenesis; peptidoglycan biosynthesis. In terms of biological role, cell wall formation. Adds enolpyruvyl to UDP-N-acetylglucosamine. The protein is UDP-N-acetylglucosamine 1-carboxyvinyltransferase of Helicobacter acinonychis (strain Sheeba).